A 211-amino-acid polypeptide reads, in one-letter code: Troponin I, cardiac muscle (211 aa).

Alanine 1 bears the N-acetylalanine mark. A disordered region spans residues 1–43 (ADESRDAAGEARPAPAPVRRRSSANYRAYATEPHAKSKKKISA). The residue at position 4 (serine 4) is a Phosphoserine. The residue at position 22 (serine 22) is a Phosphoserine; by PHK, PKA and PKD/PRKD1. Serine 23 is modified (phosphoserine; by PKA and PKD/PRKD1). Tyrosine 26 carries the phosphotyrosine modification. Residue threonine 31 is modified to Phosphothreonine; by STK4/MST1. The interval 32–79 (EPHAKSKKKISASRKLQLKTLMLQIAKQELEREAEERRGEKGRALSTR) is involved in binding TNC. Phosphoserine; by PKC/PRKCE is present on residues serine 42 and serine 44. Threonine 51 bears the Phosphothreonine; by STK4/MST1 mark. Serine 77 carries the post-translational modification Phosphoserine. Threonine 78 is subject to Phosphothreonine. Threonine 129 and threonine 143 each carry phosphothreonine; by STK4/MST1. The involved in binding TNC and actin stretch occupies residues 129–150 (TQKIFDLRGKFKRPTLRLRVRI). Serine 151 bears the Phosphoserine; by PAK3 mark. The residue at position 182 (threonine 182) is a Phosphothreonine. At serine 200 the chain carries Phosphoserine.

It belongs to the troponin I family. Interacts with TRIM63. Binds to actin and tropomyosin. Interacts with STK4/MST1. Phosphorylated at Ser-22 and Ser-23 by PRKD1; phosphorylation reduces myofilament calcium sensitivity. Phosphorylated preferentially at Thr-31. Phosphorylation by STK4/MST1 alters its binding affinity to TNNC1 (cardiac Tn-C) and TNNT2 (cardiac Tn-T). Phosphorylated at Ser-42 and Ser-44 by PRKCE; phosphorylation increases myocardium contractile dysfunction. Ser-22 is one of three sites in the region of residues 1-48 that are phosphorylated by phosphorylase kinase.

In terms of biological role, troponin I is the inhibitory subunit of troponin, the thin filament regulatory complex which confers calcium-sensitivity to striated muscle actomyosin ATPase activity. This is Troponin I, cardiac muscle (TNNI3) from Oryctolagus cuniculus (Rabbit).